The sequence spans 230 residues: uncharacterized protein (230 aa).

A divalent metal cation is bound by residues Glu74, Glu76, and Asp105.

The protein belongs to the FAH family.

This is an uncharacterized protein from Pyrococcus horikoshii (strain ATCC 700860 / DSM 12428 / JCM 9974 / NBRC 100139 / OT-3).